An 85-amino-acid polypeptide reads, in one-letter code: Large ribosomal subunit protein bL27 (85 aa).

A disordered region spans residues 1–25 (MAHKKGVGSSRNGRDSNPKMLGVKR).

This sequence belongs to the bacterial ribosomal protein bL27 family.

This is Large ribosomal subunit protein bL27 from Roseiflexus castenholzii (strain DSM 13941 / HLO8).